Reading from the N-terminus, the 306-residue chain is Nucleotide-binding protein MUL_1815 (306 aa).

G29–G36 serves as a coordination point for ATP. D80–S83 serves as a coordination point for GTP.

Belongs to the RapZ-like family.

In terms of biological role, displays ATPase and GTPase activities. The sequence is that of Nucleotide-binding protein MUL_1815 from Mycobacterium ulcerans (strain Agy99).